Here is a 281-residue protein sequence, read N- to C-terminus: Diaminopimelate epimerase (281 aa).

Asparagine 13, glutamine 46, and asparagine 66 together coordinate substrate. The active-site Proton donor is the cysteine 75. Substrate contacts are provided by residues glycine 76 to asparagine 77, asparagine 160, asparagine 193, and glutamate 211 to arginine 212. The Proton acceptor role is filled by cysteine 220. Glycine 221 to threonine 222 is a substrate binding site.

Belongs to the diaminopimelate epimerase family. In terms of assembly, homodimer.

The protein resides in the cytoplasm. The catalysed reaction is (2S,6S)-2,6-diaminopimelate = meso-2,6-diaminopimelate. The protein operates within amino-acid biosynthesis; L-lysine biosynthesis via DAP pathway; DL-2,6-diaminopimelate from LL-2,6-diaminopimelate: step 1/1. Its function is as follows. Catalyzes the stereoinversion of LL-2,6-diaminopimelate (L,L-DAP) to meso-diaminopimelate (meso-DAP), a precursor of L-lysine and an essential component of the bacterial peptidoglycan. The sequence is that of Diaminopimelate epimerase from Acinetobacter baylyi (strain ATCC 33305 / BD413 / ADP1).